The primary structure comprises 2104 residues: 5'-3' DNA helicase ZGRF1 (2104 aa).

A compositionally biased stretch (polar residues) spans 335–345 (SSPIHSSTVDG). Positions 335 to 359 (SSPIHSSTVDGNDTERKPKAQEDDV) are disordered. Position 336 is a phosphoserine (Ser336). Positions 347 to 356 (DTERKPKAQE) are enriched in basic and acidic residues. Residues Ser793 and Ser864 each carry the phosphoserine modification. Zn(2+)-binding residues include Cys1349, His1351, Cys1374, and Cys1382. Residues 1349 to 1391 (CHHSQPAKLVMVKKEGPNKGRLFYTCDGPKADRCKFFKWLEDV) form a GRF-type zinc finger. The interval 2085-2104 (VEEKQKKKSEKEKSKDKSHS) is disordered.

Interacts with DNA repair protein RAD51; the interaction promotes RAD51 strand exchange activity. Also interacts with DNA repair proteins EXO1 and BRCA1; the interactions are increased following DNA damage induction.

The protein resides in the nucleus. It carries out the reaction ATP + H2O = ADP + phosphate + H(+). The enzyme catalyses Couples ATP hydrolysis with the unwinding of duplex DNA at the replication fork by translocating in the 5'-3' direction. This creates two antiparallel DNA single strands (ssDNA). The leading ssDNA polymer is the template for DNA polymerase III holoenzyme which synthesizes a continuous strand.. In terms of biological role, 5'-3' DNA helicase which is recruited to sites of DNA damage and promotes repair of replication-blocking DNA lesions through stimulation of homologous recombination (HR). Promotes HR by directly stimulating RAD51-mediated strand exchange activity. Not required to load RAD51 at sites of DNA damage but promotes recombinational repair after RAD51 recruitment. Also promotes HR by positively regulating EXO1-mediated DNA end resection of double-strand breaks. Required for recruitment of replication protein RPA2 to DNA damage sites. Promotes the initiation of the G2/M checkpoint but not its maintenance. Catalyzes Holliday junction branch migration and dissociation of D-loops and DNA flaps. This is 5'-3' DNA helicase ZGRF1 (ZGRF1) from Homo sapiens (Human).